We begin with the raw amino-acid sequence, 264 residues long: Glutamate racemase (264 aa).

Residues 11-12 (DS) and 43-44 (YG) contribute to the substrate site. Residue C74 is the Proton donor/acceptor of the active site. 75 to 76 (NT) contributes to the substrate binding site. The active-site Proton donor/acceptor is the C193. 194–195 (TH) lines the substrate pocket.

The protein belongs to the aspartate/glutamate racemases family.

It carries out the reaction L-glutamate = D-glutamate. It functions in the pathway cell wall biogenesis; peptidoglycan biosynthesis. Its function is as follows. Provides the (R)-glutamate required for cell wall biosynthesis. The chain is Glutamate racemase from Bifidobacterium longum subsp. infantis (strain ATCC 15697 / DSM 20088 / JCM 1222 / NCTC 11817 / S12).